A 101-amino-acid chain; its full sequence is Small ribosomal subunit protein uS14 (101 aa).

This sequence belongs to the universal ribosomal protein uS14 family. As to quaternary structure, part of the 30S ribosomal subunit. Contacts proteins S3 and S10.

Its function is as follows. Binds 16S rRNA, required for the assembly of 30S particles and may also be responsible for determining the conformation of the 16S rRNA at the A site. This is Small ribosomal subunit protein uS14 from Ruegeria sp. (strain TM1040) (Silicibacter sp.).